A 531-amino-acid chain; its full sequence is Ceramide kinase (531 aa).

Positions 1-115 are essential for enzyme activity; it reads MGAMGAAEPL…SADEQLCHLW (115 aa). A required for binding to sulfatide and phosphoinositides region spans residues 1–125; the sequence is MGAMGAAEPL…LQTLRGLLES (125 aa). The region spanning 128–278 is the DAGKc domain; that stretch reads SRPKHLLVFI…IDVSSVHYHN (151 aa). ATP is bound by residues 138-140 and 170-174; these read NPF and TEHAN. 195 to 198 is a binding site for substrate; it reads GGDG. Asp-197 (proton donor/acceptor) is an active-site residue. Residues Glu-202, 239 to 241, Arg-304, and Arg-310 each bind ATP; that span reads GST. Phosphoserine occurs at positions 340 and 408. 502–504 lines the ATP pocket; that stretch reads DGE.

Requires Ca(2+) as cofactor. Mg(2+) is required as a cofactor. In terms of tissue distribution, high level expression in heart, brain, testis and pancreas; low expression in spleen, liver and lung; not detected in skeletal muscle.

The protein localises to the cytoplasm. It is found in the cell membrane. It carries out the reaction an N-acylsphing-4-enine + ATP = an N-acylsphing-4-enine 1-phosphate + ADP + H(+). It catalyses the reaction N-(hexanoyl)sphing-4-enine + ATP = N-hexanoylsphing-4-enine 1-phosphate + ADP + H(+). The catalysed reaction is N-(acetyl)-sphing-4-enine + ATP = N-(acetyl)-sphing-4-enine-1-phosphate + ADP + H(+). The enzyme catalyses N-hexadecanoylsphing-4-enine + ATP = N-(hexadecanoyl)-sphing-4-enine-1-phosphate + ADP + H(+). It carries out the reaction N-hexanoyl-(4R)-hydroxysphinganine + ATP = N-hexanoyl-(4R)-hydroxysphinganine-1-phosphate + ADP + H(+). Functionally, catalyzes specifically the phosphorylation of ceramide to form ceramide 1-phosphate. Acts efficiently on natural and analog ceramides (C6, C8, C16 ceramides, and C8-dihydroceramide), to a lesser extent on C2-ceramide and C6-dihydroceramide, but not on other lipids, such as various sphingosines. Shows a greater preference for D-erythro isomer of ceramides. Binds phosphoinositides. The sequence is that of Ceramide kinase (Cerk) from Mus musculus (Mouse).